The following is a 428-amino-acid chain: Serine--tRNA ligase (428 aa).

Residue 231 to 233 (TAE) participates in L-serine binding. 262–264 (RAE) contributes to the ATP binding site. E285 contributes to the L-serine binding site. Residue 349 to 352 (EISS) participates in ATP binding. S385 provides a ligand contact to L-serine.

This sequence belongs to the class-II aminoacyl-tRNA synthetase family. Type-1 seryl-tRNA synthetase subfamily. As to quaternary structure, homodimer. The tRNA molecule binds across the dimer.

It localises to the cytoplasm. It carries out the reaction tRNA(Ser) + L-serine + ATP = L-seryl-tRNA(Ser) + AMP + diphosphate + H(+). The enzyme catalyses tRNA(Sec) + L-serine + ATP = L-seryl-tRNA(Sec) + AMP + diphosphate + H(+). The protein operates within aminoacyl-tRNA biosynthesis; selenocysteinyl-tRNA(Sec) biosynthesis; L-seryl-tRNA(Sec) from L-serine and tRNA(Sec): step 1/1. Its function is as follows. Catalyzes the attachment of serine to tRNA(Ser). Is also able to aminoacylate tRNA(Sec) with serine, to form the misacylated tRNA L-seryl-tRNA(Sec), which will be further converted into selenocysteinyl-tRNA(Sec). The chain is Serine--tRNA ligase from Methylorubrum extorquens (strain PA1) (Methylobacterium extorquens).